Here is a 229-residue protein sequence, read N- to C-terminus: Ras-related protein RabZ (229 aa).

The disordered stretch occupies residues 1–39; sequence MGCFHSREPTATGKTKKEEPTSAVKTNKEEKSSNYVSEP. Gly-2 is lipidated: N-myristoyl glycine. Cys-3 is lipidated: S-palmitoyl cysteine. Positions 15–32 are enriched in basic and acidic residues; the sequence is TKKEEPTSAVKTNKEEKS. Residue 57–64 coordinates GTP; the sequence is GDQATGKS. The Effector region motif lies at 79–88; the sequence is HKPSPIIIDC. GTP is bound by residues 106 to 110 and 164 to 167; these read DTAGQ and NKCD.

Belongs to the small GTPase superfamily. Rab family. In terms of processing, although this sequence lacks the C-terminal cysteine motifs subject to isoprenylation in other Rab proteins, it does have N-terminal myristoylation and S-palmitoylation sequence motifs.

The sequence is that of Ras-related protein RabZ (rabZ) from Dictyostelium discoideum (Social amoeba).